The chain runs to 482 residues: E3 ubiquitin-protein ligase makorin-1 (482 aa).

Low complexity predominate over residues 26–38 (ASPTPIPTVTAPS). Residues 26 to 52 (ASPTPIPTVTAPSLGAGGGGGGSDGSG) form a disordered region. Residues 40–52 (GAGGGGGGSDGSG) show a composition bias toward gly residues. C3H1-type zinc fingers lie at residues 55–82 (WTKQ…HDLS), 84–111 (SPYS…HSKP), and 208–235 (ETKK…HGDS). A makorin-type Cys-His region spans residues 236 to 263 (CDMCGLQVLHPMDAAQRSQHIKSCIEAH). The RING-type zinc-finger motif lies at 281–335 (CGICMEVVYEKANPSERRFGILSNCNHTYCLKCIRKWRSAKQFESKIIKSCPECR). The segment at 364 to 393 (AMSNKACRYFDEGRGSCPFGGNCFYKHAYP) adopts a C3H1-type 4 zinc-finger fold.

As to quaternary structure, interacts with p53/TP53 and CDKN1A. Interacts with TERT, modulating telomere length homeostasis. Post-translationally, auto-ubiquitinated; which leads to proteasomal degradation. As to expression, ubiquitous.

It catalyses the reaction S-ubiquitinyl-[E2 ubiquitin-conjugating enzyme]-L-cysteine + [acceptor protein]-L-lysine = [E2 ubiquitin-conjugating enzyme]-L-cysteine + N(6)-ubiquitinyl-[acceptor protein]-L-lysine.. Its pathway is protein modification; protein ubiquitination. Its function is as follows. E3 ubiquitin ligase catalyzing the covalent attachment of ubiquitin moieties onto substrate proteins. These substrates include FILIP1, p53/TP53, CDKN1A and TERT. Keeps cells alive by suppressing p53/TP53 under normal conditions, but stimulates apoptosis by repressing CDKN1A under stress conditions. Acts as a negative regulator of telomerase. Has negative and positive effects on RNA polymerase II-dependent transcription. The polypeptide is E3 ubiquitin-protein ligase makorin-1 (MKRN1) (Homo sapiens (Human)).